Here is a 356-residue protein sequence, read N- to C-terminus: MRVAVGMSGGVDSSVTALLLKEQGHDVIRVTLRFHTVEACEVNETHNVCCSPKDVQDASRVAKRLGIPHLVFSWEEIFKSKVIDYFVEEYKRGRTPNPCALCNREVKTGFFARYLKQVADIDKLATGHYAKIEEDKKYGLVIKRPKDRKRDQTYFLSLVRREDLELLTFPLGAYTKEEVREIAKRYGLEVAQKRDSQEVCFLMGKSPGEYLEGILGKQRGLIKHVSGKVLGEHEGVYRYTIGQRRGLGISYGKPVYVIDIDAKTNTLIVGEEEYLYNDKLLVKEINFHVPLEKWENVSAQIRYRHKPVPVERIEKTEEGFLVKFKEDVRGITPGQVVAFYDGDVLLGGGIIEESVK.

ATP-binding positions include 6–13 and L32; that span reads GMSGGVDS. Residue C102 is the Nucleophile of the active site. C102 and C200 are disulfide-bonded. Position 127 (G127) interacts with ATP. The interval 150–152 is interaction with tRNA; it reads RDQ. The active-site Cysteine persulfide intermediate is C200. Positions 302–303 are interaction with tRNA; that stretch reads RY.

Belongs to the MnmA/TRMU family.

The protein resides in the cytoplasm. It carries out the reaction S-sulfanyl-L-cysteinyl-[protein] + uridine(34) in tRNA + AH2 + ATP = 2-thiouridine(34) in tRNA + L-cysteinyl-[protein] + A + AMP + diphosphate + H(+). Catalyzes the 2-thiolation of uridine at the wobble position (U34) of tRNA, leading to the formation of s(2)U34. In Aquifex aeolicus (strain VF5), this protein is tRNA-specific 2-thiouridylase MnmA.